A 468-amino-acid polypeptide reads, in one-letter code: Beta-monoglucosyldiacylglycerol synthase (468 aa).

4 helical membrane passes run Ala-51–Gly-71, Ser-72–Ala-92, Met-358–Met-378, and Met-387–Leu-407.

This sequence belongs to the glycosyltransferase 2 family. Mg(2+) serves as cofactor.

The protein resides in the membrane. It carries out the reaction a 1,2-diacyl-sn-glycerol + UDP-alpha-D-glucose = a 1,2-diacyl-3-O-(beta-D-glucopyranosyl)-sn-glycerol + UDP + H(+). Glucosyltransferase involved in the biosynthesis of the non-bilayer-forming membrane lipid beta-monoglucosyldiacylglycerol which contributes to regulate the properties and stability of the membrane. Catalyzes the transfer of a glucosyl residue from UDP-Glc to diacylglycerol (DAG) acceptor to form the corresponding beta-glucosyl-DAG (1,2-diacyl-3-O-(beta-D-glucopyranosyl)-sn-glycerol). It can only use UDP-Glc as sugar donor. Two types of DAG (dipalmitoyl-DAG (DPDAG) and 1-oleoyl-2-palmitoyl-DAG (OPDAG)) can be used as sugar acceptors, but OPDAG is preferred. The protein is Beta-monoglucosyldiacylglycerol synthase of Nostoc sp. (strain PCC 7120 / SAG 25.82 / UTEX 2576).